A 137-amino-acid polypeptide reads, in one-letter code: Neutral phospholipase A2 ammodytin I2 (137 aa).

A signal peptide spans 1 to 16 (MRTLWIVAVCLIGVEG). 7 cysteine pairs are disulfide-bonded: C42-C131, C44-C60, C59-C111, C65-C137, C66-C104, C73-C97, and C91-C102. Positions 43, 45, and 47 each coordinate Ca(2+). H63 is a catalytic residue. D64 serves as a coordination point for Ca(2+). Residue D105 is part of the active site.

It belongs to the phospholipase A2 family. Group II subfamily. D49 sub-subfamily. Ca(2+) is required as a cofactor. In terms of tissue distribution, expressed by the venom gland.

It is found in the secreted. The enzyme catalyses a 1,2-diacyl-sn-glycero-3-phosphocholine + H2O = a 1-acyl-sn-glycero-3-phosphocholine + a fatty acid + H(+). In terms of biological role, snake venom phospholipase A2 (PLA2) that has enzymatic activity but is non-toxic. Displays low binding affinity and enzymatic activity on phosphatidylserine-containing vesicles and HEK-293 plasma membranes, in contrast to ammodytoxins that have high activity on these phospholipids. PLA2 catalyzes the calcium-dependent hydrolysis of the 2-acyl groups in 3-sn-phosphoglycerides. This chain is Neutral phospholipase A2 ammodytin I2, found in Vipera ammodytes ammodytes (Western sand viper).